Reading from the N-terminus, the 745-residue chain is ATP-dependent zinc metalloprotease FtsH (745 aa).

Over 1 to 11 (MNNRRNGLFRN) the chain is Cytoplasmic. A helical membrane pass occupies residues 12 to 32 (SLFYILMFLSLMGIIYFFFGG). Residues 33-131 (NSGSQTQNIR…VTAKAEESSG (99 aa)) are Extracellular-facing. Residues 132-152 (IWVTLLMYIAPVILMLFLFYM) form a helical membrane-spanning segment. Residues 153–745 (MMGQAGQGGG…SSQDDTNSQA (593 aa)) lie on the Cytoplasmic side of the membrane. Residue 227–234 (GPPGTGKT) participates in ATP binding. His-449 is a binding site for Zn(2+). Glu-450 is an active-site residue. The Zn(2+) site is built by His-453 and Asp-525. The span at 630 to 673 (MPEKDSNEFPSEKAATFEESKRELERREAEKHAQNQSADDKQAD) shows a compositional bias: basic and acidic residues. Residues 630-745 (MPEKDSNEFP…SSQDDTNSQA (116 aa)) form a disordered region. Residues 690–704 (SESDASSEVSADSSV) are compositionally biased toward low complexity. Over residues 705 to 745 (NSTANSATESATDSDVATSATGLPNAESATPSSQDDTNSQA) the composition is skewed to polar residues.

In the central section; belongs to the AAA ATPase family. This sequence in the C-terminal section; belongs to the peptidase M41 family. Homohexamer. The cofactor is Zn(2+).

Its subcellular location is the cell membrane. Acts as a processive, ATP-dependent zinc metallopeptidase for both cytoplasmic and membrane proteins. Plays a role in the quality control of integral membrane proteins. This chain is ATP-dependent zinc metalloprotease FtsH, found in Lactiplantibacillus plantarum (strain ATCC BAA-793 / NCIMB 8826 / WCFS1) (Lactobacillus plantarum).